Reading from the N-terminus, the 727-residue chain is Polyphosphate kinase (727 aa).

N82 provides a ligand contact to ATP. Residues R412 and R442 each contribute to the Mg(2+) site. Catalysis depends on H472, which acts as the Phosphohistidine intermediate. 3 residues coordinate ATP: Y505, R601, and H629.

This sequence belongs to the polyphosphate kinase 1 (PPK1) family. Mg(2+) serves as cofactor. An intermediate of this reaction is the autophosphorylated ppk in which a phosphate is covalently linked to a histidine residue through a N-P bond.

The catalysed reaction is [phosphate](n) + ATP = [phosphate](n+1) + ADP. Functionally, catalyzes the reversible transfer of the terminal phosphate of ATP to form a long-chain polyphosphate (polyP). This Pseudomonas putida (strain ATCC 47054 / DSM 6125 / CFBP 8728 / NCIMB 11950 / KT2440) protein is Polyphosphate kinase.